The primary structure comprises 173 residues: Thiol-disulfide oxidoreductase ResA (173 aa).

Residues 10 to 29 (VIILLILCGAVGFTLYQGFF) form a helical; Signal-anchor for type II membrane protein membrane-spanning segment. Positions 35-173 (MQIGKEAPNF…LEGYLQKITP (139 aa)) constitute a Thioredoxin domain. Cysteines 73 and 76 form a disulfide.

Belongs to the thioredoxin family. ResA subfamily.

Its subcellular location is the cell membrane. The protein operates within protein modification; cytochrome c assembly. In terms of biological role, thiol-disulfide oxidoreductase which is required in disulfide reduction during c-type cytochrome synthesis. May accept reducing equivalents from CcdA, leading to breakage of disulfide bonds in apocytochrome c; following this reduction heme can be covalently attached. The protein is Thiol-disulfide oxidoreductase ResA of Bacillus cereus (strain ZK / E33L).